Here is a 194-residue protein sequence, read N- to C-terminus: Large ribosomal subunit protein uL6z/uL6y (194 aa).

Position 75 is a phosphothreonine (threonine 75).

Belongs to the universal ribosomal protein uL6 family.

The sequence is that of Large ribosomal subunit protein uL6z/uL6y (RPL9B) from Arabidopsis thaliana (Mouse-ear cress).